Consider the following 166-residue polypeptide: Interferon gamma-related (166 aa).

A signal peptide spans 1–26; that stretch reads MYCRLNMVYLICALLLIVSLQGTVGA. Asn-91 carries an N-linked (GlcNAc...) asparagine glycan.

This sequence belongs to the type II (or gamma) interferon family. In terms of assembly, homodimer. As to expression, strongly expressed in spleen. Also detected at lower levels in gill, kidney, heart, brain and intestine. In immune cell populations, expressed at highest levels in peripheral blood leukocytes and at lower levels in splenocytes, granulocytes, monocytes and macrophages.

The protein localises to the secreted. Cytokine which binds to interferon gamma receptor 1 (ifngr1). Has activating effects on primary macrophages. Induces nitric oxide production and phagocytic responses in macrophages. Primes monocytes for production of reactive oxygen intermediates (ROI), although the effect is short-lived. Also has inhibitory effects on monocyte priming by ifng1 (interferon gamma 1) and tnfb (TNF-alpha 2). Stimulates phosphorylation of the JAK/STAT signal transducer stat1, but fails to induce stat1 nuclear localization. Promotes increased expression of a number of genes important for macrophage activity, including the interferon regulatory factors irf2 and irf9. The protein is Interferon gamma-related of Carassius auratus (Goldfish).